The primary structure comprises 1594 residues: MIPHSSAGVQSWGHPLRAVNNGSGHVDASQAVGPPDPQFEKLPTPVPQPQPRQPAVIDLTTSGGDAQELEPPPKRLRLDLPAAPSARDASPAPGSGGELRSTPGTGGSKPPSLSWRNRPVWSFQAMLSEVPGSNVMNEEDATAVAQGGKPASPPSLPVLPWKYIPESLGSNPTTSRASSPVKEVQTIPYRIETPSVAPVLKGEKVADFSPWIGNHPEDVLNEQTAKQGHYDRTQVSQNESNTARPSLYAQLKHRSGLQMLSSVFAAALEKRQNHSLVTAPSTFKPPPRVTLTDNKREAWLRDLANPSVPLRKLSRTIPHGIRGKALLDQCLNKGIPVNRAVWLAKCVGANEIRAFKRKGTSGTLALGLEAKWVRDWTASVQQFLEGVLGACGSAQWKMKMTYAVSLTARLFFERLLDHDQYLGWFLSSLEAAPVNIVPVWLLMLGIYWDNIMRYRKRGRRLAELLLVKLRQVTQPDKGGPLQPLVDRLSLYVRRLVLEHTSSVVLPGSWENHKELISSCLNLKDNVHKTIYQNLSERNSRLQLPKNHQDTAERSPQQRVIQLFDSIRSAHDISSASTACLKTIEDKAILISKLLEWTATPFRYGLCRVYTGVRLLRKWKMSGIDVDSYILSFLADVRVTSALNMENIYHIISELVRSQTFSVGRYLQWLMAKGVTNTPQPVPSDLCLLKQLPANRLPEHVRNLRNTLLYRAGIPVMEEDSAIAELKISIAQRLPNIFGAEMDSAMPTESSQPHPTWAVKSEIGQWIRHGIAGHCRDSPRYVYLLSRSTAPANNYRKLSGVSVAVDPGASALTPDEFYSVREILETFGDLSMLADILKQATRCDDDVVLASVADTVNCHFDCFCVIGATADLFRGLVESYARLKRLGNASLDLLFSLIELGLRIPSEFNTVALLRQDLTRLENKSALAAPSPLSDSIPLALSDVDPSFQEKLNQLLSSGGGMDESTMDTVFYSLMHILENSGSPAKLSANETARYLAYLRPFQPKHFDTMLIRWICGLLKSSTPSMSRILPPLIGVGCVTIHAFVFLVKKLLQSEKVAAVIPNLAGLRVDLLQLLVPLVSGKSKYADLVTYRFHVAQQEFFMKHPQETLDIICDAVALVNSETGSNPGQPDIAGCATELLDILLTQNPEVTVQYCLQGFIGKHSTSTTVLERALDNLLGFDSLAGPPTMSEAEKVVRMTDDFSLPFCQLKLQMLFNAESGRNVGNGIVDVMFKAAVEDTRSKGSNWVGFVGLMSQDIIRQVWKHHYHYKNLEAHGHPGTAKSLETAKLYLTIIEKLAYSVPEAGVQSVAPILVEKMDLLLHRLVIMQTNFNNVTMNRHGAATTQILQSRSNFERSLAFWFSAFLRMIVIHRSAFTMPSPAPRANGLQEQSRLLISILCISLARLPDSVIRLFPAADYFPHPIPSQGYRPCPGILLQTHALDVAASLIDTFPDEARQQCARFLKEKCPPFLQYQNDSRFIYLLGPMSDAAALNSLQAASLPSPAAGGSTPTPTPSSALPGAPSNPQPTAMTPAVTSASLSEGINCVASHLRLQYRGRAMGPYPVRPWELLEDAAPIVGVNDTAVNLKYFDARRVRA.

Disordered stretches follow at residues 1-116 and 1499-1532; these read MIPH…LSWR and PSPAAGGSTPTPTPSSALPGAPSNPQPTAMTPAV. 2 stretches are compositionally biased toward low complexity: residues 81–93 and 1499–1521; these read PAAPSARDASPAP and PSPAAGGSTPTPTPSSALPGAPS.

This sequence belongs to the Mediator complex subunit 12 family. As to quaternary structure, component of the srb8-11 complex, which itself associates with the Mediator complex.

The protein localises to the nucleus. Functionally, component of the srb8-11 complex. The srb8-11 complex is a regulatory module of the Mediator complex which is itself involved in regulation of basal and activated RNA polymerase II-dependent transcription. The srb8-11 complex may be involved in the transcriptional repression of a subset of genes regulated by Mediator. It may inhibit the association of the Mediator complex with RNA polymerase II to form the holoenzyme complex. The protein is Mediator of RNA polymerase II transcription subunit 12 (srb8) of Aspergillus oryzae (strain ATCC 42149 / RIB 40) (Yellow koji mold).